Reading from the N-terminus, the 316-residue chain is Aspartate carbamoyltransferase catalytic subunit (316 aa).

Residues R66 and T67 each coordinate carbamoyl phosphate. Position 94 (K94) interacts with L-aspartate. Carbamoyl phosphate contacts are provided by R116, H146, and Q149. L-aspartate-binding residues include R179 and R234. Positions 275 and 276 each coordinate carbamoyl phosphate.

Belongs to the aspartate/ornithine carbamoyltransferase superfamily. ATCase family. Heterododecamer (2C3:3R2) of six catalytic PyrB chains organized as two trimers (C3), and six regulatory PyrI chains organized as three dimers (R2).

The enzyme catalyses carbamoyl phosphate + L-aspartate = N-carbamoyl-L-aspartate + phosphate + H(+). The protein operates within pyrimidine metabolism; UMP biosynthesis via de novo pathway; (S)-dihydroorotate from bicarbonate: step 2/3. Its function is as follows. Catalyzes the condensation of carbamoyl phosphate and aspartate to form carbamoyl aspartate and inorganic phosphate, the committed step in the de novo pyrimidine nucleotide biosynthesis pathway. In Nitrosomonas europaea (strain ATCC 19718 / CIP 103999 / KCTC 2705 / NBRC 14298), this protein is Aspartate carbamoyltransferase catalytic subunit.